A 332-amino-acid chain; its full sequence is Phospho-N-acetylmuramoyl-pentapeptide-transferase (332 aa).

8 consecutive transmembrane segments (helical) span residues 9 to 29 (IYTI…IIPF), 55 to 75 (TIGG…AGLI), 79 to 99 (LWVA…DDFI), 115 to 135 (MSLQ…ISVM), 155 to 175 (IPQY…VVVA), 196 to 216 (IVAA…LAIF), 253 to 273 (AVAI…IYFA), and 312 to 332 (VVIV…LGLN).

The protein belongs to the glycosyltransferase 4 family. MraY subfamily. Mg(2+) serves as cofactor.

Its subcellular location is the cell membrane. It catalyses the reaction UDP-N-acetyl-alpha-D-muramoyl-L-alanyl-gamma-D-glutamyl-meso-2,6-diaminopimeloyl-D-alanyl-D-alanine + di-trans,octa-cis-undecaprenyl phosphate = di-trans,octa-cis-undecaprenyl diphospho-N-acetyl-alpha-D-muramoyl-L-alanyl-D-glutamyl-meso-2,6-diaminopimeloyl-D-alanyl-D-alanine + UMP. Its pathway is cell wall biogenesis; peptidoglycan biosynthesis. Its function is as follows. Catalyzes the initial step of the lipid cycle reactions in the biosynthesis of the cell wall peptidoglycan: transfers peptidoglycan precursor phospho-MurNAc-pentapeptide from UDP-MurNAc-pentapeptide onto the lipid carrier undecaprenyl phosphate, yielding undecaprenyl-pyrophosphoryl-MurNAc-pentapeptide, known as lipid I. The sequence is that of Phospho-N-acetylmuramoyl-pentapeptide-transferase from Alkaliphilus oremlandii (strain OhILAs) (Clostridium oremlandii (strain OhILAs)).